Here is a 1835-residue protein sequence, read N- to C-terminus: Protein TIC 214 (1835 aa).

6 helical membrane passes run 25–45 (VGLYYGFLTTFSIGPSYLFLL), 64–84 (FITGQLMMFISIYYAPLHLAL), 87–107 (PHTITVLVLPYLLFHFFWNNH), 124–144 (LSIQCVFLNNLIFQLFNHFIL), 172–192 (VGWLIGHIFFMKWVGLVLFWI), and 221–241 (IFSILLFITCVYYLGRIPSPI). Over residues 246-258 (LKETSETEERGES) the composition is skewed to basic and acidic residues. 3 disordered regions span residues 246–304 (LKET…DGNQ), 735–759 (EFKTSDSEEKEAKEKEKTKEEKKEE), and 1535–1578 (NRNQ…KRQS). Residues 259 to 268 (AEETDVEIET) are compositionally biased toward acidic residues. Over residues 1553–1569 (PRNRQKDLEKDYAESDI) the composition is skewed to basic and acidic residues.

The protein belongs to the TIC214 family. As to quaternary structure, part of the Tic complex.

It localises to the plastid. Its subcellular location is the chloroplast inner membrane. In terms of biological role, involved in protein precursor import into chloroplasts. May be part of an intermediate translocation complex acting as a protein-conducting channel at the inner envelope. This chain is Protein TIC 214, found in Liriodendron tulipifera (Tuliptree).